Here is a 287-residue protein sequence, read N- to C-terminus: Acetylglutamate kinase (287 aa).

Residues 70-71, Arg-92, and Asn-184 each bind substrate; that span reads GG.

This sequence belongs to the acetylglutamate kinase family. ArgB subfamily.

Its subcellular location is the cytoplasm. It carries out the reaction N-acetyl-L-glutamate + ATP = N-acetyl-L-glutamyl 5-phosphate + ADP. It participates in amino-acid biosynthesis; L-arginine biosynthesis; N(2)-acetyl-L-ornithine from L-glutamate: step 2/4. Catalyzes the ATP-dependent phosphorylation of N-acetyl-L-glutamate. The protein is Acetylglutamate kinase of Dinoroseobacter shibae (strain DSM 16493 / NCIMB 14021 / DFL 12).